Reading from the N-terminus, the 165-residue chain is uncharacterized protein (165 aa).

The chain crosses the membrane as a helical span at residues 15-35; that stretch reads MSPAIILIGVLILIVLFVIKF. Residues 67–119 adopt a coiled-coil conformation; the sequence is ISQLNTLRATLAAKKKELKTLRTARKKECTEQLAKTQAEVDRIQAKIDNFSSR. The segment at 123–156 is disordered; the sequence is VPLPGGEVGPPYNPPPPRTNTRPNPRPNPRPAQL. Residues 133–154 are compositionally biased toward pro residues; that stretch reads PYNPPPPRTNTRPNPRPNPRPA.

It is found in the membrane. This is an uncharacterized protein from Acheta domesticus (House cricket).